Reading from the N-terminus, the 83-residue chain is Small ribosomal subunit protein bS20 (83 aa).

Belongs to the bacterial ribosomal protein bS20 family.

In terms of biological role, binds directly to 16S ribosomal RNA. The polypeptide is Small ribosomal subunit protein bS20 (Staphylococcus carnosus (strain TM300)).